The sequence spans 379 residues: Inactive deoxyhypusine synthase (379 aa).

The tract at residues 1-48 (MLASVPAPRPAKKDSAASRRKSASKSTGAAVKDGSSARVSASGAAESP) is disordered. Residues 36–47 (SARVSASGAAES) are compositionally biased toward low complexity. NAD(+) is bound by residues 115 to 119 (SNMIS), 141 to 143 (SAG), Glu147, and Asp256. 146 to 147 (EE) contributes to the spermidine binding site. Position 261 (Asp261) interacts with spermidine. Position 302 (Gly302) interacts with NAD(+). A spermidine-binding site is contributed by His307. NAD(+) is bound at residue 323-324 (TG). Spermidine is bound by residues 329–331 (GCV) and 338–344 (DDVACGL). 357–358 (DA) serves as a coordination point for NAD(+).

Belongs to the deoxyhypusine synthase family.

In Leishmania donovani, this protein is Inactive deoxyhypusine synthase.